The chain runs to 172 residues: FMN reductase (NADH) RutF 2 (172 aa).

The protein belongs to the non-flavoprotein flavin reductase family. RutF subfamily.

It catalyses the reaction FMNH2 + NAD(+) = FMN + NADH + 2 H(+). Its function is as follows. Catalyzes the reduction of FMN to FMNH2 which is used to reduce pyrimidine by RutA via the Rut pathway. This is FMN reductase (NADH) RutF 2 from Methylorubrum extorquens (strain PA1) (Methylobacterium extorquens).